The chain runs to 358 residues: Methylthioribose-1-phosphate isomerase (358 aa).

Substrate-binding positions include 54-56 (RGA), arginine 96, and glutamine 205. The active-site Proton donor is the aspartate 246. 256-257 (GK) provides a ligand contact to substrate.

It belongs to the eIF-2B alpha/beta/delta subunits family. MtnA subfamily.

The catalysed reaction is 5-(methylsulfanyl)-alpha-D-ribose 1-phosphate = 5-(methylsulfanyl)-D-ribulose 1-phosphate. It functions in the pathway amino-acid biosynthesis; L-methionine biosynthesis via salvage pathway; L-methionine from S-methyl-5-thio-alpha-D-ribose 1-phosphate: step 1/6. Catalyzes the interconversion of methylthioribose-1-phosphate (MTR-1-P) into methylthioribulose-1-phosphate (MTRu-1-P). The chain is Methylthioribose-1-phosphate isomerase from Pseudomonas putida (strain ATCC 47054 / DSM 6125 / CFBP 8728 / NCIMB 11950 / KT2440).